Here is a 119-residue protein sequence, read N- to C-terminus: Fluoride-specific ion channel FluC 2 (119 aa).

The helical transmembrane segment at Phe46 to Val66 threads the bilayer. Residues Gly70 and Thr73 each contribute to the Na(+) site. The helical transmembrane segment at Leu96–Val116 threads the bilayer.

It belongs to the fluoride channel Fluc/FEX (TC 1.A.43) family.

It is found in the cell membrane. The catalysed reaction is fluoride(in) = fluoride(out). Its activity is regulated as follows. Na(+) is not transported, but it plays an essential structural role and its presence is essential for fluoride channel function. Its function is as follows. Fluoride-specific ion channel. Important for reducing fluoride concentration in the cell, thus reducing its toxicity. The chain is Fluoride-specific ion channel FluC 2 from Haloarcula marismortui (strain ATCC 43049 / DSM 3752 / JCM 8966 / VKM B-1809) (Halobacterium marismortui).